The chain runs to 105 residues: UPF0473 protein SAK_2028 (105 aa).

Belongs to the UPF0473 family.

The protein is UPF0473 protein SAK_2028 of Streptococcus agalactiae serotype Ia (strain ATCC 27591 / A909 / CDC SS700).